The following is a 270-amino-acid chain: MVFARVNEADVTEAILDGFYSSLKKHLRSDVIVVGAGPAGLTAAWRLAEAGARVLIVEQNNYLGGGLWLGGYFMNPVTIRAPAQRILDELEVPYEAVKPGLYRTKGPLLAAKLAARALEAGAEVLNLTMLDDVIVENSRVAGVVVNWSPVQGLPRQITCVDPVGLRAEYVVDATGHDAVVTRKLAERGMVEASKLGPMWVERSEDLVVEKTGEVYPGLVVAGIAVAEVYGLPRMGPTFGAMLLSGEKAAALIGEKLGLKVKVAAAPASQA.

NAD(+) is bound by residues alanine 39, 58–59 (EQ), glycine 66, and leucine 130. Residue cysteine 159 is modified to 2,3-didehydroalanine (Cys). Aspartate 161 contributes to the NAD(+) binding site. Residues aspartate 161 and histidine 176 each contribute to the Fe cation site. Isoleucine 223 is an NAD(+) binding site. Arginine 233 is a glycine binding site.

It belongs to the THI4 family. In terms of assembly, homooctamer; tetramer of dimers. Requires Fe(2+) as cofactor. In terms of processing, during the catalytic reaction, a sulfide is transferred from Cys-159 to a reaction intermediate, generating a dehydroalanine residue.

The enzyme catalyses [ADP-thiazole synthase]-L-cysteine + glycine + NAD(+) = [ADP-thiazole synthase]-dehydroalanine + ADP-5-ethyl-4-methylthiazole-2-carboxylate + nicotinamide + 3 H2O + 2 H(+). It participates in cofactor biosynthesis; thiamine diphosphate biosynthesis. Its function is as follows. Involved in biosynthesis of the thiamine precursor thiazole. Catalyzes the conversion of NAD and glycine to adenosine diphosphate 5-(2-hydroxyethyl)-4-methylthiazole-2-carboxylic acid (ADT), an adenylated thiazole intermediate. The reaction includes an iron-dependent sulfide transfer from a conserved cysteine residue of the protein to a thiazole intermediate. The enzyme can only undergo a single turnover, which suggests it is a suicide enzyme. The protein is Thiamine thiazole synthase of Aeropyrum pernix (strain ATCC 700893 / DSM 11879 / JCM 9820 / NBRC 100138 / K1).